A 314-amino-acid polypeptide reads, in one-letter code: Homoserine O-acetyltransferase (314 aa).

The active-site Acyl-thioester intermediate is the C142. Positions 163 and 192 each coordinate substrate. H235 acts as the Proton acceptor in catalysis. E237 is a catalytic residue. R249 is a substrate binding site.

The protein belongs to the MetA family.

The protein localises to the cytoplasm. It carries out the reaction L-homoserine + acetyl-CoA = O-acetyl-L-homoserine + CoA. The protein operates within amino-acid biosynthesis; L-methionine biosynthesis via de novo pathway; O-acetyl-L-homoserine from L-homoserine: step 1/1. Its function is as follows. Transfers an acetyl group from acetyl-CoA to L-homoserine, forming acetyl-L-homoserine. The protein is Homoserine O-acetyltransferase of Azobacteroides pseudotrichonymphae genomovar. CFP2.